The following is a 125-amino-acid chain: Cu-Zn superoxide dismutase-like protein OPG175 (125 aa).

A disulfide bridge connects residues Cys52 and Cys102.

This sequence belongs to the Cu-Zn superoxide dismutase family.

It is found in the virion. Its subcellular location is the host cytoplasm. In terms of biological role, superoxide dismutase-like protein with no enzymatic activity. The polypeptide is Cu-Zn superoxide dismutase-like protein OPG175 (OPG175) (Vaccinia virus (strain Western Reserve) (VACV)).